We begin with the raw amino-acid sequence, 517 residues long: Xylosidase/arabinosidase (517 aa).

Aspartate 15 functions as the Proton acceptor in the catalytic mechanism. The Proton donor role is filled by glutamate 185.

The protein belongs to the glycosyl hydrolase 43 family.

It carries out the reaction Hydrolysis of (1-&gt;4)-beta-D-xylans, to remove successive D-xylose residues from the non-reducing termini.. It catalyses the reaction Hydrolysis of terminal non-reducing alpha-L-arabinofuranoside residues in alpha-L-arabinosides.. Functionally, has a 1.6-fold higher activity as an arabinosidase than as a beta-xylosidase when tested on the substrates nitrophenyl-beta-D-xylopyranoside and P-nitrophenyl-alpha-L-arabinofuranoside. The polypeptide is Xylosidase/arabinosidase (xylB) (Butyrivibrio fibrisolvens).